A 68-amino-acid chain; its full sequence is Small ribosomal subunit protein bS21 (68 aa).

This sequence belongs to the bacterial ribosomal protein bS21 family.

The polypeptide is Small ribosomal subunit protein bS21 (Endomicrobium trichonymphae).